Reading from the N-terminus, the 264-residue chain is Pimeloyl-[acyl-carrier protein] methyl ester esterase (264 aa).

Positions 23–244 constitute an AB hydrolase-1 domain; it reads LVMLHGWGVN…MLAKASHAPF (222 aa). Substrate is bound by residues tryptophan 29, 87–88, and 150–154; these read SL and FLAIQ. Serine 87 (nucleophile) is an active-site residue. Active-site residues include aspartate 214 and histidine 241. Substrate is bound at residue histidine 241.

It belongs to the AB hydrolase superfamily. Carboxylesterase BioH family. In terms of assembly, monomer.

The protein resides in the cytoplasm. The catalysed reaction is 6-carboxyhexanoyl-[ACP] methyl ester + H2O = 6-carboxyhexanoyl-[ACP] + methanol + H(+). It functions in the pathway cofactor biosynthesis; biotin biosynthesis. The physiological role of BioH is to remove the methyl group introduced by BioC when the pimeloyl moiety is complete. It allows to synthesize pimeloyl-ACP via the fatty acid synthetic pathway through the hydrolysis of the ester bonds of pimeloyl-ACP esters. This chain is Pimeloyl-[acyl-carrier protein] methyl ester esterase, found in Shewanella sp. (strain MR-7).